We begin with the raw amino-acid sequence, 1272 residues long: CST complex subunit CTC1 (1272 aa).

This sequence belongs to the CTC1 family. Component of the CST complex, composed of CTC1, TEN1 and STN1. Interacts with POT1A.

It is found in the nucleus. The protein resides in the chromosome. Its subcellular location is the telomere. Its function is as follows. Component of the CST complex, a complex that binds to single-stranded DNA and is required to protect telomeres from DNA degradation. The CST complex binds single-stranded DNA with high affinity in a sequence-independent manner, while isolated subunits bind DNA with low affinity by themselves. Associates with enzymatically active telomerase. In Arabidopsis thaliana (Mouse-ear cress), this protein is CST complex subunit CTC1.